The following is a 126-amino-acid chain: Apolipoprotein C-IV (126 aa).

Positions 1-27 (MSLLRHRLQALPSLCLCVLVLACIGAC) are cleaved as a signal peptide.

It belongs to the apolipoprotein C4 family.

It is found in the secreted. In terms of biological role, may participate in lipoprotein metabolism. The chain is Apolipoprotein C-IV (APOC4) from Aotus nancymaae (Ma's night monkey).